The primary structure comprises 259 residues: 3-deoxy-manno-octulosonate cytidylyltransferase (259 aa).

Belongs to the KdsB family.

Its subcellular location is the cytoplasm. It carries out the reaction 3-deoxy-alpha-D-manno-oct-2-ulosonate + CTP = CMP-3-deoxy-beta-D-manno-octulosonate + diphosphate. Its pathway is nucleotide-sugar biosynthesis; CMP-3-deoxy-D-manno-octulosonate biosynthesis; CMP-3-deoxy-D-manno-octulosonate from 3-deoxy-D-manno-octulosonate and CTP: step 1/1. It participates in bacterial outer membrane biogenesis; lipopolysaccharide biosynthesis. Functionally, activates KDO (a required 8-carbon sugar) for incorporation into bacterial lipopolysaccharide in Gram-negative bacteria. This chain is 3-deoxy-manno-octulosonate cytidylyltransferase, found in Xanthomonas euvesicatoria pv. vesicatoria (strain 85-10) (Xanthomonas campestris pv. vesicatoria).